The sequence spans 596 residues: MHFSVRLSLFLTLASSLPLVSAVPQHEDQAYTFSSSGRSAATDTDPALEVRQETQRTPSAWTRLRDSLVESVWGLPQRSEGCESRPRNRAKTVSRAPATLQARYGEDVVLRFTIKNQEEVKALVEASNILFLDVWGSHDDWVDIRLSRDVIPSLLGLLPPSLQTSHVPLIRDLAQTIYESYPKAGSASPSQQGPTTRRFSPSASTSKSKPHETKNIFFQDYQPLSVLLPWMRLLVSMFSSHTTLISVGTTAEGRDIPALRVGVHPTNNAQQAPRRRTIVISGGTHAREWISVSTVSYIAYSFITGYGKSKSITKLLEQFDYVFIPTVNPDGYAYTFSTDRLWRKNRQQTSLSFCPGIDLDHSWGYEWDGNATRSNPCSESYAGDQPFEAVEAREIASWARNEVTVNNVHFVAFVDLHSYSQQILYPYGHSCAHLPANLENLEELGAGLAKAIRKSSRENYDVKAACRGIVASCTGDKDADEPATSSALESTAGSALDWFFHDLDVRFSYQIKLRDRGSYGFLLPREHIVPTGKEIYRAMVAMGKFLVSPHVLEEDIDGLRASEEPQDYDNDLEDGEDDKDEQGSTVFRAQADDLQS.

The N-terminal stretch at 1 to 22 (MHFSVRLSLFLTLASSLPLVSA) is a signal peptide. Positions 23 to 184 (VPQHEDQAYT…QTIYESYPKA (162 aa)) are excised as a propeptide. Residues 182 to 211 (PKAGSASPSQQGPTTRRFSPSASTSKSKPH) form a disordered region. The segment covering 187 to 207 (ASPSQQGPTTRRFSPSASTSK) has biased composition (polar residues). One can recognise a Peptidase M14 domain in the interval 220–546 (DYQPLSVLLP…RAMVAMGKFL (327 aa)). Residues His285 and Glu288 each coordinate Zn(2+). Substrate contacts are provided by residues 285–288 (HARE), Arg343, and 360–361 (DH). Cys354 and Cys377 form a disulfide bridge. N-linked (GlcNAc...) asparagine glycosylation occurs at Asn370. His417 serves as a coordination point for Zn(2+). 418–419 (SY) is a substrate binding site. Residues 557 to 596 (DGLRASEEPQDYDNDLEDGEDDKDEQGSTVFRAQADDLQS) are disordered. Positions 564 to 580 (EPQDYDNDLEDGEDDKD) are enriched in acidic residues. The span at 583-596 (GSTVFRAQADDLQS) shows a compositional bias: polar residues.

It belongs to the peptidase M14 family. Zn(2+) serves as cofactor.

It localises to the vacuole. The protein resides in the secreted. Functionally, inactive carboxypeptidase that may play a role in cell wall organization and biogenesis. This Arthroderma benhamiae (strain ATCC MYA-4681 / CBS 112371) (Trichophyton mentagrophytes) protein is Inactive metallocarboxypeptidase ECM14 (ECM14).